Reading from the N-terminus, the 463-residue chain is Cytochrome c-552 (463 aa).

The signal sequence occupies residues 1 to 23 (MNVKSIALSAVIATSFLAAGAMA). Residue His83 participates in heme c binding. Heme is bound by residues Cys111, Cys114, and Lys115. The heme c site is built by Cys149, Cys152, His153, Cys191, Cys194, and His195. Ca(2+) is bound by residues Glu197, Tyr198, Lys246, and Gln248. Tyr198 is a binding site for substrate. A substrate-binding site is contributed by His249. Heme c contacts are provided by His260, Cys267, Cys270, His271, His286, Cys299, Cys302, His303, and His378.

Belongs to the cytochrome c-552 family. The cofactor is Ca(2+). Heme c is required as a cofactor.

It is found in the periplasm. It carries out the reaction 6 Fe(III)-[cytochrome c] + NH4(+) + 2 H2O = 6 Fe(II)-[cytochrome c] + nitrite + 8 H(+). It functions in the pathway nitrogen metabolism; nitrate reduction (assimilation). In terms of biological role, catalyzes the reduction of nitrite to ammonia, consuming six electrons in the process. The polypeptide is Cytochrome c-552 (Shewanella frigidimarina (strain NCIMB 400)).